A 555-amino-acid polypeptide reads, in one-letter code: O-fucosyltransferase 20 (555 aa).

Topologically, residues Met-1–Arg-58 are cytoplasmic. The chain crosses the membrane as a helical; Signal-anchor for type II membrane protein span at residues Ile-59–Val-79. The Lumenal segment spans residues Asp-80–Gln-555. The segment at Lys-110 to Glu-130 is disordered. Residues Asn-111 and Asn-124 are each glycosylated (N-linked (GlcNAc...) asparagine). His-330–Arg-332 is a substrate binding site. N-linked (GlcNAc...) asparagine glycans are attached at residues Asn-371 and Asn-503. Residues Gln-525–Gln-555 are disordered. Residues Arg-529 to Gln-555 show a composition bias toward basic and acidic residues.

Belongs to the glycosyltransferase GT106 family. Highly expressed in embryogenic microspore and in vegetative tissues.

The protein resides in the golgi apparatus membrane. The protein operates within glycan metabolism. Its function is as follows. May play a role in the biosynthesis of matrix polysaccharides and contribute to the biomechanics and development of the plant cell wall. The polypeptide is O-fucosyltransferase 20 (Brassica napus (Rape)).